A 348-amino-acid chain; its full sequence is N-formyl peptide receptor 2 (348 aa).

Asn1 carries an N-linked (GlcNAc...) asparagine glycan. At 1–24 the chain is on the extracellular side; sequence NFSTPLNEHEEVSYESAGYTVLRI. The helical transmembrane segment at 25 to 47 threads the bilayer; sequence LPLVVLGVTFVLGVLGNGLVIWV. Over 48–58 the chain is Cytoplasmic; it reads AGFRMTRTVTT. The chain crosses the membrane as a helical span at residues 59-80; it reads ICYLNLALADFSFTATLPFLIV. Residues 81-97 are Extracellular-facing; that stretch reads SMAMGEKWPFGWFLCKL. A disulfide bridge connects residues Cys95 and Cys173. A helical transmembrane segment spans residues 98 to 118; it reads IHIVVDINLFGSVFLIGFIAL. Residues 119–137 lie on the Cytoplasmic side of the membrane; the sequence is DRCICVLHPVWAQNHRTVS. A helical membrane pass occupies residues 138 to 159; sequence LAMKVIVGPWILALVLTLPVFL. Over 160–202 the chain is Extracellular; sequence FLTTVTIPNGDTYCTFNFASWGGTPEERQKVAITMLTARGIIR. The chain crosses the membrane as a helical span at residues 203–223; sequence FVIGFSLPMSIVAICYGLIAA. At 224–239 the chain is on the cytoplasmic side; the sequence is KIHKKGMIKSSRPLRV. The helical transmembrane segment at 240–263 threads the bilayer; the sequence is LTAVVASFFICWFPFQLVALLGTV. The Extracellular segment spans residues 264–283; the sequence is WLKEMLFYGKYKIIDILVNP. Residues 284–303 traverse the membrane as a helical segment; it reads TSSLAFFNSCLNPMLYVFVG. Over 304–348 the chain is Cytoplasmic; sequence QDFRERLIHSLPTSLERALSEDSAPTNDTAASCASPPAETELQAM. Residues 323-348 are disordered; that stretch reads SEDSAPTNDTAASCASPPAETELQAM. Residues 326-335 show a composition bias toward polar residues; that stretch reads SAPTNDTAAS.

The protein belongs to the G-protein coupled receptor 1 family. In terms of assembly, interacts with APP; the interaction takes place at the cell surface and the complex is then rapidly internalized.

It localises to the cell membrane. Low affinity receptor for N-formyl-methionyl peptides, which are powerful neutrophil chemotactic factors. Binding of FMLP to the receptor causes activation of neutrophils. This response is mediated via a G-protein that activates a phosphatidylinositol-calcium second messenger system. Receptor for the chemokine-like protein FAM19A5, mediating FAM19A5-stimulated macrophage chemotaxis and the inhibitory effect on TNFSF11/RANKL-induced osteoclast differentiation. The chain is N-formyl peptide receptor 2 (FPR2) from Gorilla gorilla gorilla (Western lowland gorilla).